The chain runs to 472 residues: Guanine nucleotide-binding protein alpha-1 subunit (472 aa).

A lipid anchor (N-myristoyl glycine) is attached at Gly2. Residue Cys3 is the site of S-palmitoyl cysteine attachment. The G-alpha domain maps to 40 to 472 (NEIKLLLLGA…QQNLKKIGII (433 aa)). Positions 43–56 (KLLLLGAGESGKST) are G1 motif. GTP is bound by residues Glu51, Ser52, Gly53, Lys54, Ser55, and Thr56. Mg(2+) is bound at residue Ser55. Residues 127–235 (LDYINASVAG…REIQGQNRRN (109 aa)) form an insert; not present in other G-proteins region. Residues 162-199 (GRAKAAFDEDGNISNVKSDTDRDAETVTQNEDADRNNS) are disordered. A Glycyl lysine isopeptide (Lys-Gly) (interchain with G-Cter in ubiquitin) cross-link involves residue Lys165. Positions 292 to 300 (DILKGRIKT) are G2 motif. Residues Leu294, Thr300, Gly322, Asn388, Lys389, Asp391, and Ala444 each coordinate GTP. Thr300 is a Mg(2+) binding site. The G3 motif stretch occupies residues 315–324 (FKVLDAGGQR). Residues 384–391 (ILFLNKID) are G4 motif. Positions 442 to 447 (TCATDT) are G5 motif.

It belongs to the G-alpha family. G(q) subfamily. In terms of assembly, g proteins are composed of 3 units; alpha, beta and gamma. The alpha chain contains the guanine nucleotide binding site. In its GDP-bound form, binds to the G protein beta-gamma dimer STE4-STE18. Directly interacts with the beta subunit STE4. Probably forms preactivation complexes with unligated receptors STE2 and STE3. Interacts with FUS3. Pheromone-induced activation of GPA1 increases its association with FUS3. Interacts with SCP160. SCP160 binds specifically to the GTP-bound form of GPA1. Interacts with the phosphatidylinositol 3-kinase (PI3K) subunits VPS15 and VPS34 at the endosome. The GTP-bound form of GPA1 binds directly and selectively to the catalytic subunit VPS34, while the GDP-bound form binds to VPS15, which appears to function as an alternative G protein beta subunit for GPA1. Interacts with regulators of G protein signaling (RGS) proteins MDM1, RAX1, RGS2 and SST2, but SST2 alone binds preferentially to the transition state conformation of GPA1, indicating that it acts as a GAP for this G protein. Mg(2+) is required as a cofactor. Post-translationally, N-myristoylation by NMT1 is pheromone-stimulated and required for palmitoylation of Cys-3. This lipid modification anchors the protein to membranes. Depalmitoylated by YLR118C/APT1. Monoubiquitination targets the protein for degradation to the vacuole, and polyubiquitination tags the protein for degradation by the proteasome. This may be an additional signaling regulation mechanism.

The protein localises to the cell membrane. It is found in the endosome membrane. With respect to regulation, alternates between an inactive form bound to GDP and an active form bound to GTP. Activated by the G protein coupled receptors (GPCRs) STE2 and STE3, which serve as guanine nucleotide-exchange factors (GEFs), and inactivated by SST2, probably acting as a GTPase-activating protein (GAP). In terms of biological role, alpha subunit of the heterotrimeric guanine nucleotide-binding protein (G protein) that mediates mating pheromone signal transduction. Binding of alpha-factor or a-factor to its cognate transmembrane receptor STE2 and STE3, respectively, allows the receptor to serve as a guanine nucleotide exchange factor (GEF) on GPA1. The exchange of GDP for GTP on the G protein alpha subunit alters its interaction with the G protein beta subunit STE4, leading to dissociation of the G protein beta-gamma dimer STE4-STE18. The dissociated subunits activate downstream effectors to activate the mating response pathway and induce changes necessary to produce mating-competent cells. STE4-STE18 activate the downstream pheromone signaling MAP kinase cascade leading to expression of mating-specific genes, inducing cell cycle arrest in G1, promoting polarized cell growth to form mating projections (shmoos), and establishing the changes in plasma membrane, cell wall and nuclear envelope to permit cell-cell fusion (plasmogamy) and fusion of the two haploid nuclei (karyogamy). GPA1 transmits a signal that requires direct binding to the effector enzyme PI3K located at the endosome, promoting increased PI3 production. The intrinsic GTPase activity of GPA1 determines the duration of signaling, and is dramatically accelerated by the RGS protein SST2. In unstimulated cells, GDP-bound GPA1 sequesters the G protein beta-gamma subunit STE4-STE18, preventing it from activating the downstream effectors. Also down-regulates the signal by inhibiting the pheromone-induced accumulation of FUS3 in the nucleus. The chain is Guanine nucleotide-binding protein alpha-1 subunit (GPA1) from Saccharomyces cerevisiae (strain ATCC 204508 / S288c) (Baker's yeast).